A 203-amino-acid polypeptide reads, in one-letter code: E3 ubiquitin-protein ligase RNF152 (203 aa).

An RING-type zinc finger spans residues 12 to 55 (CQICFNYYSPRRRPKLLDCKHTCCSVCLQQMRTSQKDVRCPWCR). The segment at 106-165 (ISKERTLLPGDMGCRLLPGSQQKSLTVVTIPAEQQPLQGGAPPEAVEEEPDRRGVVKSST) is necessary for interaction with RRAGA. Residues 139-158 (QQPLQGGAPPEAVEEEPDRR) form a disordered region. A helical membrane pass occupies residues 167 to 187 (SGVCTVILVACVLVFLLGIVL).

This sequence belongs to the RNF152 family. Interacts with RRAGA (inactive GDP-bound form); stimulated by amino acid starvation. Interacts with SEC16A. In terms of processing, ubiquitinated. Autoubiquitinated in vitro, leading to its degradation by the proteasome.

It localises to the lysosome membrane. The catalysed reaction is S-ubiquitinyl-[E2 ubiquitin-conjugating enzyme]-L-cysteine + [acceptor protein]-L-lysine = [E2 ubiquitin-conjugating enzyme]-L-cysteine + N(6)-ubiquitinyl-[acceptor protein]-L-lysine.. The protein operates within protein modification; protein ubiquitination. In terms of biological role, E3 ubiquitin-protein ligase that acts as a negative regulator of mTORC1 signaling by mediating ubiquitination of RagA/RRAGA and RHEB. Catalyzes 'Lys-63'-linked polyubiquitination of RagA/RRAGA in response to amino acid starvation, thereby regulating mTORC1 signaling. Also mediates monoubiquitination of RHEB, promoting its association with the TSC-TBC complex and subsequent inhibition. Also mediates 'Lys-48'-linked polyubiquitination of target proteins and their subsequent targeting to the proteasome for degradation. Induces apoptosis when overexpressed. The chain is E3 ubiquitin-protein ligase RNF152 from Mus musculus (Mouse).